A 66-amino-acid polypeptide reads, in one-letter code: MPKLKTKSGAKKRFKVTGTGKVVSAHAGKRHGMIKRTKKQIRQLRGTRILFKTDGENIKKYFLPNA.

The protein belongs to the bacterial ribosomal protein bL35 family.

The protein is Large ribosomal subunit protein bL35 of Rhodopseudomonas palustris (strain BisB18).